The chain runs to 192 residues: Phosphoheptose isomerase (192 aa).

An SIS domain is found at 37–192; it reads LADSFKAGGK…IQLIEKEMVK (156 aa). 52–54 contacts substrate; it reads NGG. His-61 and Glu-65 together coordinate Zn(2+). Residues Glu-65, 93–94, 119–121, Ser-124, and Gln-172 each bind substrate; these read ND and STS. Zn(2+) contacts are provided by Gln-172 and His-180.

The protein belongs to the SIS family. GmhA subfamily. As to quaternary structure, homotetramer. Zn(2+) is required as a cofactor.

Its subcellular location is the cytoplasm. The enzyme catalyses 2 D-sedoheptulose 7-phosphate = D-glycero-alpha-D-manno-heptose 7-phosphate + D-glycero-beta-D-manno-heptose 7-phosphate. It participates in carbohydrate biosynthesis; D-glycero-D-manno-heptose 7-phosphate biosynthesis; D-glycero-alpha-D-manno-heptose 7-phosphate and D-glycero-beta-D-manno-heptose 7-phosphate from sedoheptulose 7-phosphate: step 1/1. In terms of biological role, catalyzes the isomerization of sedoheptulose 7-phosphate in D-glycero-D-manno-heptose 7-phosphate. The sequence is that of Phosphoheptose isomerase from Enterobacter sp. (strain 638).